The following is a 103-amino-acid chain: DNA-binding protein TRF1 (103 aa).

DNA-binding protein that recognizes the inverted terminal repeats of the pGKl linear DNA plasmids. The chain is DNA-binding protein TRF1 (TRF1) from Kluyveromyces lactis (strain ATCC 8585 / CBS 2359 / DSM 70799 / NBRC 1267 / NRRL Y-1140 / WM37) (Yeast).